A 107-amino-acid chain; its full sequence is Serine-rich and transmembrane domain-containing protein 1 (107 aa).

Residues 43–63 (IYVSIFLSLLAFLLLLLIIAL) traverse the membrane as a helical segment.

It is found in the membrane. The chain is Serine-rich and transmembrane domain-containing protein 1 (SERTM1) from Homo sapiens (Human).